Reading from the N-terminus, the 492-residue chain is Uridine-cytidine kinase D (492 aa).

The tract at residues 36–56 (PLPKNKKDHDQSIESDSSFTR) is disordered. ATP is bound at residue 117–124 (GPVGAGKT). A CYTH domain is found at 290–460 (EPVYVCKAKY…PQTFLYLYFK (171 aa)). Over residues 468 to 483 (PNYSKLKPNNTNSKIL) the composition is skewed to low complexity. The segment at 468–492 (PNYSKLKPNNTNSKILKNNKDKKNL) is disordered.

This sequence belongs to the uridine kinase family.

The catalysed reaction is uridine + ATP = UMP + ADP + H(+). The enzyme catalyses cytidine + ATP = CMP + ADP + H(+). It participates in pyrimidine metabolism; CTP biosynthesis via salvage pathway; CTP from cytidine: step 1/3. The protein operates within pyrimidine metabolism; UMP biosynthesis via salvage pathway; UMP from uridine: step 1/1. Functionally, catalyzes the conversion of uridine into uridine monophosphate and cytidine into cytidine monophosphate in the pyrimidine salvage pathway. The protein is Uridine-cytidine kinase D (udkD) of Dictyostelium discoideum (Social amoeba).